A 79-amino-acid polypeptide reads, in one-letter code: Translational regulator CsrA (79 aa).

It belongs to the CsrA/RsmA family. In terms of assembly, homodimer; the beta-strands of each monomer intercalate to form a hydrophobic core, while the alpha-helices form wings that extend away from the core.

It is found in the cytoplasm. In terms of biological role, a translational regulator that binds mRNA to regulate translation initiation and/or mRNA stability. Usually binds in the 5'-UTR at or near the Shine-Dalgarno sequence preventing ribosome-binding, thus repressing translation. Its main target seems to be the major flagellin gene, while its function is anatagonized by FliW. This chain is Translational regulator CsrA, found in Geotalea uraniireducens (strain Rf4) (Geobacter uraniireducens).